A 406-amino-acid chain; its full sequence is Mitochondrial ribosome-associated GTPase 2 (406 aa).

Residues 15-406 (FEGVGHWALS…LGQGRQPLRW (392 aa)) are localized in the mitochondria. Residues 30–406 (KPSRLLPQQA…LGQGRQPLRW (377 aa)) are not localized in the mitochondria. The Obg domain maps to 70-224 (RYFVDYRRVL…RVLHLELKTV (155 aa)). The region spanning 225-390 (AHAGMVGFPN…LLLHLKVLYD (166 aa)) is the OBG-type G domain. Residues 231–238 (GFPNAGKS), 256–260 (FTTLK), 278–281 (DIPG), 345–348 (NKID), and 371–373 (SAL) each bind GTP. Positions 238 and 258 each coordinate Mg(2+).

It belongs to the TRAFAC class OBG-HflX-like GTPase superfamily. OBG GTPase family. Associates with the mitochondrial ribosome large subunit; the association occurs in a GTP-dependent manner. It depends on Mg(2+) as a cofactor.

The protein resides in the mitochondrion. The protein localises to the mitochondrion inner membrane. Functionally, plays a role in the regulation of the mitochondrial ribosome assembly and of translational activity. Displays GTPase activity. Involved in the ribosome maturation process. In Pongo abelii (Sumatran orangutan), this protein is Mitochondrial ribosome-associated GTPase 2 (MTG2).